The primary structure comprises 158 residues: uncharacterized protein (158 aa).

The segment covering 1–18 has biased composition (polar residues); it reads MDLASEITSATQTSSLCS. Disordered regions lie at residues 1–20, 66–94, and 111–158; these read MDLASEITSATQTSSLCSSG, LRDLSRRGSTSSSRSPSRPVSTSASKPCL, and GSSG…GEEF. Residues 72–90 show a composition bias toward low complexity; the sequence is RGSTSSSRSPSRPVSTSAS. Composition is skewed to polar residues over residues 111–120 and 149–158; these read GSSGHLQSPG and LSHSAQGEEF.

This is an uncharacterized protein from Homo sapiens (Human).